A 133-amino-acid polypeptide reads, in one-letter code: Exosome complex protein C1739.07 (133 aa).

The tract at residues 96–133 (VNPKTEAVNTSNAAISSSSSNRPKVAKDAATRIIKHHT) is disordered. Residues 102–116 (AVNTSNAAISSSSSN) show a composition bias toward low complexity.

This sequence belongs to the C1D family. In terms of assembly, component of the exosome multienzyme ribonuclease complex. Interacts with cut3.

It is found in the cytoplasm. The protein resides in the nucleus. Functionally, required for exosome-dependent processing of pre-rRNA and small nucleolar RNA (snRNA) precursors. Involved in processing of 35S pre-rRNA at the A0, A1 and A2 sites. This Schizosaccharomyces pombe (strain 972 / ATCC 24843) (Fission yeast) protein is Exosome complex protein C1739.07.